A 255-amino-acid polypeptide reads, in one-letter code: Small ribosomal subunit protein uS2 (255 aa).

This sequence belongs to the universal ribosomal protein uS2 family.

This chain is Small ribosomal subunit protein uS2, found in Streptococcus pyogenes serotype M28 (strain MGAS6180).